Reading from the N-terminus, the 169-residue chain is Mu-like prophage FluMu host-nuclease inhibitor protein gam (169 aa).

To phage Mu protein gam.

In terms of biological role, protects linear double-stranded DNA of Mu genome from exonuclease degradation. This chain is Mu-like prophage FluMu host-nuclease inhibitor protein gam, found in Haemophilus influenzae (strain ATCC 51907 / DSM 11121 / KW20 / Rd).